We begin with the raw amino-acid sequence, 475 residues long: Lipoprotein lipase (475 aa).

Residues 1–27 (MESKALLVLTLAVWLQSLTASRGGVAA) form the signal peptide. The interval 32 to 53 (RDFIDIESKFALRTPEDTAEDT) is interaction with GPIHBP1. An intrachain disulfide couples C54 to C67. A glycan (N-linked (GlcNAc...) asparagine) is linked at N70. 3'-nitrotyrosine is present on Y121. The Nucleophile role is filled by S159. The active-site Charge relay system is the D183. Y191 is subject to 3'-nitrotyrosine. A194, R197, S199, and D202 together coordinate Ca(2+). Cysteines 243 and 266 form a disulfide. An essential for determining substrate specificity region spans residues 243–266 (CNIGEAIRVIAERGLGDVDQLVKC). The active-site Charge relay system is H268. 2 disulfides stabilise this stretch: C291–C310 and C302–C305. One can recognise a PLAT domain in the interval 341–464 (FHYQVKIHFS…KGKAPAVFVK (124 aa)). Y343 is subject to 3'-nitrotyrosine. The N-linked (GlcNAc...) asparagine glycan is linked to N386. Residues 417–421 (WSDWW) are important for interaction with lipoprotein particles. The tract at residues 430–434 (KIRVK) is important for heparin binding. Residues 443–467 (IFCSREKVSHLQKGKAPAVFVKCHD) are interaction with GPIHBP1. Residues C445 and C465 are joined by a disulfide bond.

This sequence belongs to the AB hydrolase superfamily. Lipase family. In terms of assembly, homodimer. Interacts with GPIHBP1 with 1:1 stoichiometry. Interacts with APOC2; the interaction activates LPL activity in the presence of lipids. Interaction with heparan sulfate proteoglycans is required to protect LPL against loss of activity. Associates with lipoprotein particles in blood plasma. Interacts with LMF1 and SEL1L; interaction with SEL1L is required to prevent aggregation of newly synthesized LPL in the endoplasmic reticulum (ER), and for normal export of LPL from the ER to the extracellular space. Interacts with SORL1; SORL1 acts as a sorting receptor, promoting LPL localization to endosomes and later to lysosomes, leading to degradation of newly synthesized LPL. Tyrosine nitration after lipopolysaccharide (LPS) challenge down-regulates the lipase activity. As to expression, detected in blood plasma. Detected in milk (at protein level).

It is found in the cell membrane. The protein resides in the secreted. It localises to the extracellular space. Its subcellular location is the extracellular matrix. It carries out the reaction a triacylglycerol + H2O = a diacylglycerol + a fatty acid + H(+). It catalyses the reaction a 1,2-diacyl-sn-glycero-3-phosphocholine + H2O = a 2-acyl-sn-glycero-3-phosphocholine + a fatty acid + H(+). The catalysed reaction is 1,2,3-tri-(9Z-octadecenoyl)-glycerol + H2O = di-(9Z)-octadecenoylglycerol + (9Z)-octadecenoate + H(+). The enzyme catalyses 1,2-di-(9Z-octadecenoyl)-sn-glycero-3-phosphocholine + H2O = (9Z-octadecenoyl)-sn-glycero-3-phosphocholine + (9Z)-octadecenoate + H(+). It carries out the reaction 1,2,3-tributanoylglycerol + H2O = dibutanoylglycerol + butanoate + H(+). It catalyses the reaction 1,2-dihexadecanoyl-sn-glycero-3-phosphocholine + H2O = hexadecanoyl-sn-glycero-3-phosphocholine + hexadecanoate + H(+). With respect to regulation, the apolipoprotein APOC2 acts as a coactivator of LPL activity. Ca(2+) binding promotes protein stability and formation of the active homodimer. Interaction with GPIHBP1 protects LPL against inactivation by ANGPTL4. Inhibited by NaCl. Functionally, key enzyme in triglyceride metabolism. Catalyzes the hydrolysis of triglycerides from circulating chylomicrons and very low density lipoproteins (VLDL), and thereby plays an important role in lipid clearance from the blood stream, lipid utilization and storage. Although it has both phospholipase and triglyceride lipase activities it is primarily a triglyceride lipase with low but detectable phospholipase activity. Mediates margination of triglyceride-rich lipoprotein particles in capillaries. Recruited to its site of action on the luminal surface of vascular endothelium by binding to GPIHBP1 and cell surface heparan sulfate proteoglycans. The polypeptide is Lipoprotein lipase (LPL) (Homo sapiens (Human)).